Reading from the N-terminus, the 423-residue chain is D-tagatose-1,6-bisphosphate aldolase subunit GatZ (423 aa).

The protein belongs to the GatZ/KbaZ family. GatZ subfamily. Forms a complex with GatY.

It functions in the pathway carbohydrate metabolism; D-tagatose 6-phosphate degradation; D-glyceraldehyde 3-phosphate and glycerone phosphate from D-tagatose 6-phosphate: step 2/2. Functionally, component of the tagatose-1,6-bisphosphate aldolase GatYZ that is required for full activity and stability of the Y subunit. Could have a chaperone-like function for the proper and stable folding of GatY. When expressed alone, GatZ does not show any aldolase activity. Is involved in the catabolism of galactitol. The polypeptide is D-tagatose-1,6-bisphosphate aldolase subunit GatZ (Salmonella choleraesuis (strain SC-B67)).